Consider the following 382-residue polypeptide: Dual-specificity RNA methyltransferase RlmN (382 aa).

Glu96 functions as the Proton acceptor in the catalytic mechanism. Residues 102–342 (QGKRGTLCVS…VRTTRGEDID (241 aa)) form the Radical SAM core domain. Cysteines 109 and 345 form a disulfide. [4Fe-4S] cluster contacts are provided by Cys116, Cys120, and Cys123. Residues 170-171 (GE), Ser202, 224-226 (SLH), and Asn302 each bind S-adenosyl-L-methionine. Cys345 (S-methylcysteine intermediate) is an active-site residue.

This sequence belongs to the radical SAM superfamily. RlmN family. [4Fe-4S] cluster is required as a cofactor.

The protein resides in the cytoplasm. The catalysed reaction is adenosine(2503) in 23S rRNA + 2 reduced [2Fe-2S]-[ferredoxin] + 2 S-adenosyl-L-methionine = 2-methyladenosine(2503) in 23S rRNA + 5'-deoxyadenosine + L-methionine + 2 oxidized [2Fe-2S]-[ferredoxin] + S-adenosyl-L-homocysteine. The enzyme catalyses adenosine(37) in tRNA + 2 reduced [2Fe-2S]-[ferredoxin] + 2 S-adenosyl-L-methionine = 2-methyladenosine(37) in tRNA + 5'-deoxyadenosine + L-methionine + 2 oxidized [2Fe-2S]-[ferredoxin] + S-adenosyl-L-homocysteine. In terms of biological role, specifically methylates position 2 of adenine 2503 in 23S rRNA and position 2 of adenine 37 in tRNAs. m2A2503 modification seems to play a crucial role in the proofreading step occurring at the peptidyl transferase center and thus would serve to optimize ribosomal fidelity. In Pseudomonas fluorescens (strain Pf0-1), this protein is Dual-specificity RNA methyltransferase RlmN.